The primary structure comprises 375 residues: Alanine racemase (375 aa).

Lys38 functions as the Proton acceptor; specific for D-alanine in the catalytic mechanism. Residue Lys38 is modified to N6-(pyridoxal phosphate)lysine. Substrate is bound at residue Arg137. Tyr266 functions as the Proton acceptor; specific for L-alanine in the catalytic mechanism. Met314 provides a ligand contact to substrate.

It belongs to the alanine racemase family. Pyridoxal 5'-phosphate is required as a cofactor.

It catalyses the reaction L-alanine = D-alanine. It participates in amino-acid biosynthesis; D-alanine biosynthesis; D-alanine from L-alanine: step 1/1. In terms of biological role, catalyzes the interconversion of L-alanine and D-alanine. May also act on other amino acids. The chain is Alanine racemase (alr) from Cutibacterium acnes (strain DSM 16379 / KPA171202) (Propionibacterium acnes).